The chain runs to 238 residues: Triggering receptor expressed on myeloid cells 1 (238 aa).

The first 20 residues, 1 to 20, serve as a signal peptide directing secretion; sequence MRSARLGRLLWMLFITEIQA. The 109-residue stretch at 21–129 folds into the Ig-like V-type domain; the sequence is ATELPEEKYI…KDPIILFYPV (109 aa). Residues 21-210 lie on the Extracellular side of the membrane; it reads ATELPEEKYI…DITRDTEISL (190 aa). Residues Cys41 and Cys113 are joined by a disulfide bond. An N-linked (GlcNAc...) asparagine glycan is attached at Asn135. The tract at residues 141–169 is disordered; that stretch reads PASAETPTQSCSPTTTLPPTTTTNRHRPR. Positions 146–163 are enriched in low complexity; the sequence is TPTQSCSPTTTLPPTTTT. A glycan (N-linked (GlcNAc...) asparagine) is linked at Asn198. A helical transmembrane segment spans residues 211 to 231; that stretch reads ILPAVCGLLSKSLVFIVLFVV. Residues 232 to 238 are Cytoplasmic-facing; the sequence is TRMSFTP.

In terms of assembly, monomer. Homomultimer; when activated. Interacts with TYROBP/DAP12. Interacts with TLR4.

The protein resides in the cell membrane. In terms of biological role, cell surface receptor that plays important roles in innate and adaptive immunity by amplifying inflammatory responses. Upon activation by various ligands such as PGLYRP1, HMGB1 or HSP70, multimerizes and forms a complex with transmembrane adapter TYROBP/DAP12. In turn, initiates a SYK-mediated cascade of tyrosine phosphorylation, activating multiple downstream mediators such as BTK, MAPK1, MAPK3 or phospholipase C-gamma. This cascade promotes the neutrophil- and macrophage-mediated release of pro-inflammatory cytokines and/or chemokines, as well as their migration and thereby amplifies inflammatory responses that are triggered by bacterial and fungal infections. By also promoting the amplification of inflammatory signals that are initially triggered by Toll-like receptor (TLR) and NOD-like receptor engagement, plays a major role in the pathophysiology of acute and chronic inflammatory diseases of different etiologies including septic shock and atherosclerosis. The polypeptide is Triggering receptor expressed on myeloid cells 1 (TREM1) (Sus scrofa (Pig)).